The following is a 338-amino-acid chain: Phosphate acyltransferase (338 aa).

The protein belongs to the PlsX family. Homodimer. Probably interacts with PlsY.

Its subcellular location is the cytoplasm. It catalyses the reaction a fatty acyl-[ACP] + phosphate = an acyl phosphate + holo-[ACP]. It participates in lipid metabolism; phospholipid metabolism. Its function is as follows. Catalyzes the reversible formation of acyl-phosphate (acyl-PO(4)) from acyl-[acyl-carrier-protein] (acyl-ACP). This enzyme utilizes acyl-ACP as fatty acyl donor, but not acyl-CoA. This Gloeobacter violaceus (strain ATCC 29082 / PCC 7421) protein is Phosphate acyltransferase.